The primary structure comprises 844 residues: Saxiphilin (844 aa).

Residues methionine 1–alanine 19 form the signal peptide. A Transferrin-like 1; first part domain is found at valine 26–aspartate 106. Disulfide bonds link cysteine 29–cysteine 64, cysteine 39–cysteine 55, cysteine 110–cysteine 130, cysteine 141–cysteine 148, cysteine 150–cysteine 172, cysteine 180–cysteine 202, cysteine 222–cysteine 244, cysteine 277–cysteine 360, cysteine 322–cysteine 335, cysteine 332–cysteine 343, cysteine 388–cysteine 402, cysteine 495–cysteine 527, cysteine 505–cysteine 518, cysteine 552–cysteine 839, cysteine 570–cysteine 799, cysteine 607–cysteine 685, cysteine 641–cysteine 655, cysteine 652–cysteine 668, and cysteine 725–cysteine 739. Thyroglobulin type-1 domains follow at residues leucine 107–cysteine 172 and leucine 177–cysteine 244. An absent in transferrins region spans residues lysine 109–leucine 249. A Transferrin-like 1; second part domain is found at glutamine 245–glycine 482. Residues valine 492–arginine 828 enclose the Transferrin-like 2 domain.

This sequence belongs to the transferrin family. Monomer. Plasma. Highest levels of transcripts found in the liver, the lung, the pancreas and the brain.

It is found in the secreted. Functionally, binds specifically to the neurotoxin saxitoxin. Its physiological role may be to transport or sequester an endogenous organic molecule other than Fe(3+). It may participate in a detoxification mechanism for neutralizing a microbial toxin. This Aquarana catesbeiana (American bullfrog) protein is Saxiphilin.